Consider the following 563-residue polypeptide: Tripeptidyl-peptidase 1 (563 aa).

The N-terminal stretch at Met-1–Cys-19 is a signal peptide. The propeptide at Ser-20 to Gly-195 is removed in mature form. A disulfide bridge links Cys-111 with Cys-122. Residues Gly-199–Pro-563 form the Peptidase S53 domain. 2 N-linked (GlcNAc...) asparagine glycosylation sites follow: Asn-210 and Asn-222. Catalysis depends on charge relay system residues Glu-272 and Asp-276. N-linked (GlcNAc...) asparagine glycosylation is found at Asn-286, Asn-313, and Asn-443. Cystine bridges form between Cys-365/Cys-526 and Cys-522/Cys-537. Catalysis depends on Ser-475, which acts as the Charge relay system. Ca(2+)-binding residues include Asp-517 and Val-518. Ca(2+)-binding residues include Gly-539, Gly-541, and Asp-543.

As to quaternary structure, monomer. Interacts with CLN5. Interacts with CLN3. It depends on Ca(2+) as a cofactor. In terms of processing, activated by autocatalytic proteolytical processing upon acidification. N-glycosylation is required for processing and activity.

The protein resides in the lysosome. The protein localises to the melanosome. The enzyme catalyses Release of an N-terminal tripeptide from a polypeptide, but also has endopeptidase activity.. Lysosomal serine protease with tripeptidyl-peptidase I activity. May act as a non-specific lysosomal peptidase which generates tripeptides from the breakdown products produced by lysosomal proteinases. Requires substrates with an unsubstituted N-terminus. This chain is Tripeptidyl-peptidase 1 (TPP1), found in Pan troglodytes (Chimpanzee).